We begin with the raw amino-acid sequence, 266 residues long: MNNLYRELAPIPGPAWAEIEEEARRTFKRNIAGRRIVDVAGPTGFETSAVTTGHIRDVQSETSGLQVKQRIVQEYIELRTPFTVTRQAIDDVARGSGDSDWQPVKDAATTIAMAEDRAILHGLDAAGIGGIVPGSSNAAVAIPDAVEDFADAVAQALSVLRTVGVDGPYSLLLSSAEYTKVSESTDHGYPIREHLSRQLGAGEIIWAPALEGALLVSTRGGDYELHLGQDLSIGYYSHDSETVELYLQETFGFLALTDESSVPLSL.

The protein belongs to the encapsulin family. Family 1 subfamily. In terms of assembly, homomultimeric. This encapsulin nanocompartment is formed by 60 subunits, and encloses one Dyp homohexamer; partially assembled 58-subunit compartments with and without cargo are also purified. May assemble the shell from dimers. Monomers form pentamers, which assemble to form hollow shells with pores 5-8 Angstroms in diameter where 3 pentamers meet.

Its subcellular location is the encapsulin nanocompartment. In terms of biological role, shell component of a type 1 encapsulin nanocompartment. Assembles into proteinaceous shells 23-24 nm in diameter with 2-2.5 nm thick walls. Endogenous cargo protein DyP (dye-decolorizing peroxidase) is targeted to the interior via its C-terminal extension; only 1 DyP hexamer is incorporated into each shell. Empty shells can be isolated in the absence of cargo. Cargo encapsulation probably precedes assembly of the nanocompartment; may assemble or disassemble via dimers, subcomplexes with a distinct preference for even numbers of subunits are detected. Nanocompartments are stable against mechanical forces; loaded nanocompartments are less stable than empty ones. Nanocompartments are stable between pH 5-10; they aggregate at pH 9-10 and start to disassemble at pH 11. They are stable in 1M NaCl, 1 M MgCl(2) and 1M CaCl(2), unstable in 20% DMSO (dimethylsulfoxide) and are stable in 20% but not 40% ethanol. In Brevibacterium linens, this protein is Type 1 encapsulin shell protein.